A 298-amino-acid chain; its full sequence is DDRGK domain-containing protein 1 (298 aa).

Residues 1–2 (ME) are Lumenal-facing. The helical transmembrane segment at 3–23 (EIFALIVSMILIVAVIPLFFW) threads the bilayer. Residues 24–298 (KRRRDARSRE…ISGMEEISVS (275 aa)) lie on the Cytoplasmic side of the membrane. The tract at residues 31–155 (SREEVAEPPQ…EEEKARQAKE (125 aa)) is disordered. The span at 101 to 155 (KRQEREAQRQAEEATRESRNTKQDWYAEMRRKKDEEREAEELKLEEEEKARQAKE) shows a compositional bias: basic and acidic residues.

Belongs to the DDRGK1 family.

Its subcellular location is the endoplasmic reticulum membrane. Substrate adapter for ufmylation, the covalent attachment of the ubiquitin-like modifier UFM1 to substrate proteins. This Arabidopsis thaliana (Mouse-ear cress) protein is DDRGK domain-containing protein 1.